A 273-amino-acid polypeptide reads, in one-letter code: R-spondin-3 (273 aa).

The N-terminal stretch at 1 to 21 is a signal peptide; the sequence is MHLRLISWFFIILNFMEYIGS. 2 FU repeats span residues 35 to 86 and 92 to 135; these read PNVS…GYYG and INKC…GLEA. N-linked (GlcNAc...) asparagine glycosylation is present at Asn36. Cystine bridges form between Cys41-Cys48, Cys45-Cys54, Cys57-Cys76, Cys80-Cys95, Cys98-Cys105, Cys102-Cys111, Cys114-Cys125, Cys129-Cys142, Cys148-Cys190, Cys159-Cys166, and Cys199-Cys206. One can recognise a TSP type-1 domain in the interval 147–207; sequence HCEASEWSPW…KCTVQRKKCP (61 aa). The interval 201-273 is disordered; sequence VQRKKCPKGE…QKSVSVSTVH (73 aa). A compositionally biased stretch (basic residues) spans 213 to 223; it reads RKGRERKRKKP. Basic and acidic residues predominate over residues 224-252; sequence NKEESKDAIPDNKGLEPSRETPEQRENKQ.

It belongs to the R-spondin family. As to quaternary structure, interacts with the extracellular domain of FZD8 and LRP6. It however does not form a ternary complex with FZD8 and LRP6. Interacts with WNT1. Binds heparin. Interacts with LGR4, LGR5 and LGR6.

It localises to the secreted. Activator of the canonical Wnt signaling pathway by acting as a ligand for LGR4-6 receptors, which acts as a key regulator of angiogenesis. Upon binding to LGR4-6 (LGR4, LGR5 or LGR6), LGR4-6 associate with phosphorylated LRP6 and frizzled receptors that are activated by extracellular Wnt receptors, triggering the canonical Wnt signaling pathway to increase expression of target genes. Also regulates the canonical Wnt/beta-catenin-dependent pathway and non-canonical Wnt signaling by acting as an inhibitor of ZNRF3, an important regulator of the Wnt signaling pathway. Acts as a ligand for frizzled FZD8 and LRP6. May negatively regulate the TGF-beta pathway. Acts as a key regulator of angiogenesis by controlling vascular stability and pruning: acts by activating the non-canonical Wnt signaling pathway in endothelial cells. Can also amplify Wnt signaling pathway independently of LGR4-6 receptors, possibly by acting as a direct antagonistic ligand to RNF43 and ZNRF3. The protein is R-spondin-3 (RSPO3) of Bos taurus (Bovine).